A 762-amino-acid polypeptide reads, in one-letter code: ATP-dependent RNA helicase SUV3 homolog, mitochondrial (762 aa).

The N-terminal 36 residues, 1–36 (MQNTRRCISLICVTRQPPSLRATYGAVAAARCLHRA), are a transit peptide targeting the mitochondrion. Residues 181–321 (NARALTRKIV…ALELLQKICE (141 aa)) enclose the Helicase ATP-binding domain. ATP is bound at residue 194–201 (GPTNSGKT). One can recognise a Helicase C-terminal domain in the interval 331–508 (RYDRLTELTV…PTADQIELYA (178 aa)). Residues 716-762 (EWDAQQVGQAAAASTSSKESQESPPDDSDDEDSYPGSYKKTRRKRRK) form a disordered region. The span at 721 to 730 (QVGQAAAAST) shows a compositional bias: polar residues. Over residues 739–748 (PPDDSDDEDS) the composition is skewed to acidic residues.

Belongs to the helicase family. Mg(2+) serves as cofactor. Requires Mn(2+) as cofactor.

It is found in the mitochondrion. The enzyme catalyses ATP + H2O = ADP + phosphate + H(+). Major helicase player in mitochondrial RNA metabolism and maintenance. Likely component of the mitochondrial degradosome (mtEXO) complex, that degrades 3' overhang double-stranded RNA with a 3'-to-5' directionality in an ATP-dependent manner. ATPase and ATP-dependent multisubstrate helicase, able to unwind double-stranded (ds) DNA and RNA, and RNA/DNA heteroduplexes in the 5'-to-3' direction. Regulates mRNA stability and is required for the correct processing and maturation of mitochondrial transcripts. The protein is ATP-dependent RNA helicase SUV3 homolog, mitochondrial of Drosophila pseudoobscura pseudoobscura (Fruit fly).